The primary structure comprises 105 residues: Large ribosomal subunit protein eL36 (105 aa).

Belongs to the eukaryotic ribosomal protein eL36 family. In terms of assembly, component of the large ribosomal subunit.

The protein localises to the cytoplasm. It localises to the cytosol. In terms of biological role, component of the large ribosomal subunit. The ribosome is a large ribonucleoprotein complex responsible for the synthesis of proteins in the cell. This is Large ribosomal subunit protein eL36 (rpl36) from Xenopus laevis (African clawed frog).